Reading from the N-terminus, the 366-residue chain is Homeobox-leucine zipper protein HOX21 (366 aa).

Disordered regions lie at residues 25-81 and 94-132; these read QQAA…SSAQ and MLGK…EKKR. The span at 36–48 shows a compositional bias: basic residues; the sequence is HHHHHHHGHHGHH. The segment covering 62-74 has biased composition (pro residues); it reads GPPPPPPPHPHNP. Residues 103–115 are compositionally biased toward gly residues; sequence GDGGGGGDEVNGG. The segment at residues 127–186 is a DNA-binding region (homeobox); that stretch reads AGEKKRRLNVEQVRTLEKNFELGNKLEPERKMQLARALGLQPRQVAIWFQNRRARWKTKQ. The segment at 185–229 is leucine-zipper; the sequence is KQLEKDYDALKRQLDAVKAENDALLNHNKKLQAEIVALKGREAAS. Disordered regions lie at residues 239-287 and 312-336; these read EASC…GGGG and LHSS…VQAA. Over residues 240–252 the composition is skewed to polar residues; the sequence is ASCSNRSENSSEI.

This sequence belongs to the HD-ZIP homeobox family. Class I subfamily. As to expression, expressed in seedlings, roots, stems, leaf blades and panicles.

The protein localises to the nucleus. Its function is as follows. Probable transcription factor. The protein is Homeobox-leucine zipper protein HOX21 (HOX21) of Oryza sativa subsp. japonica (Rice).